A 231-amino-acid polypeptide reads, in one-letter code: MTAQRRQAPIASRETLQALLSEGAEALGVALSDAQRGALLDYVALLAKWNAVYNLTAIRDPRQMLIQHILDSLSIVPHLGARGAAATALDVGSGGGLPGIVLAIALPGWQVTLNDIVQKKSAFQNQAKAELKLGNLSVVTGRVETLRPGADVQGKFDVIVSRAFADLADFVTLARHLVAPGGSIWAMKGVRPDEEIGRLPDGARVKQMIRLTVPSLDAERHLIEVELDEAI.

S-adenosyl-L-methionine is bound by residues glycine 92, leucine 97, 143–144 (VE), and arginine 162.

This sequence belongs to the methyltransferase superfamily. RNA methyltransferase RsmG family.

It localises to the cytoplasm. It carries out the reaction guanosine(527) in 16S rRNA + S-adenosyl-L-methionine = N(7)-methylguanosine(527) in 16S rRNA + S-adenosyl-L-homocysteine. In terms of biological role, specifically methylates the N7 position of guanine in position 527 of 16S rRNA. The sequence is that of Ribosomal RNA small subunit methyltransferase G from Burkholderia thailandensis (strain ATCC 700388 / DSM 13276 / CCUG 48851 / CIP 106301 / E264).